The sequence spans 367 residues: Peptide chain release factor 2 (367 aa).

Position 254 is an N5-methylglutamine (Gln-254).

This sequence belongs to the prokaryotic/mitochondrial release factor family. In terms of processing, methylated by PrmC. Methylation increases the termination efficiency of RF2.

The protein localises to the cytoplasm. In terms of biological role, peptide chain release factor 2 directs the termination of translation in response to the peptide chain termination codons UGA and UAA. The protein is Peptide chain release factor 2 of Burkholderia mallei (strain ATCC 23344).